Here is a 563-residue protein sequence, read N- to C-terminus: Calmodulin-binding protein 60 G (563 aa).

Positions 1 to 76 (MKIRNSPSFH…SSCVSMERSR (76 aa)) are calmodulin-binding. Positions 147–263 (ESWTVEGFNR…VSATRLAERK (117 aa)) are DNA-binding.

This sequence belongs to the plant ACBP60 protein family. As to quaternary structure, interacts with calmodulin (CaM) in the presence of calcium ions; this interaction is required for defense responses. (Microbial infection) Interacts with V.dahliae SCP41; the interaction is direct and inhibits CBP60G. Expressed in seedlings, roots, leaves, inflorescences and flowers, and, to a lower extent, in siliques. Particularly present in guard cells.

It localises to the nucleus. Its function is as follows. Transcription activator that binds DNA in a sequence-specific manner, 5'-GAAATTTTGG-3', to promote the expression of target genes. Recruited to the promoter of ICS1 and other defense-related genes (e.g. PR1, PR2 and EDS5) in response to both biotic (e.g. Pseudomonas syringae pv. maculicola ES4326, P.syringae pv. tomato DC3000, and microbe-associated molecular patterns (MAMPs) such as flg22) and abiotic stresses (e.g. UV-B, drought and abscisic acid), thus triggering rapid defense responses by stimulating salicylic acid (SA) biosynthesis. Involved in basal and systemic acquired resistance to P.syringae and Hyaloperonospora arabidopsidis. Mediates resistance to drought and sensitivity to abscisic acid (ABA), especially for ABA-mediated signaling process that regulates early seedling growth. This chain is Calmodulin-binding protein 60 G, found in Arabidopsis thaliana (Mouse-ear cress).